Consider the following 404-residue polypeptide: Dihydrolipoyllysine-residue acetyltransferase component of pyruvate dehydrogenase complex (404 aa).

The Lipoyl-binding domain maps to 2-78 (PIKILMPALS…PVNSLIAVLS (77 aa)). Lys43 carries the N6-lipoyllysine modification. One can recognise a Peripheral subunit-binding (PSBD) domain in the interval 128–165 (FASPLAKRLAKIRNIRLESVQGSGPHGRIVKQDILSYS). The active site involves His377.

This sequence belongs to the 2-oxoacid dehydrogenase family. As to quaternary structure, forms a 24-polypeptide structural core with octahedral symmetry. Requires (R)-lipoate as cofactor.

It carries out the reaction N(6)-[(R)-dihydrolipoyl]-L-lysyl-[protein] + acetyl-CoA = N(6)-[(R)-S(8)-acetyldihydrolipoyl]-L-lysyl-[protein] + CoA. Functionally, the pyruvate dehydrogenase complex catalyzes the overall conversion of pyruvate to acetyl-CoA and CO(2). It contains multiple copies of three enzymatic components: pyruvate dehydrogenase (E1), dihydrolipoamide acetyltransferase (E2) and lipoamide dehydrogenase (E3). The sequence is that of Dihydrolipoyllysine-residue acetyltransferase component of pyruvate dehydrogenase complex (pdhC) from Rickettsia typhi (strain ATCC VR-144 / Wilmington).